The following is a 124-amino-acid chain: Small ribosomal subunit protein uS13c (124 aa).

The tract at residues 100–124 (GQRTRTNARTRKGKVKTAVAKKKGR) is disordered. A compositionally biased stretch (basic residues) spans 101–124 (QRTRTNARTRKGKVKTAVAKKKGR).

The protein belongs to the universal ribosomal protein uS13 family. Part of the 30S ribosomal subunit.

The protein resides in the plastid. It is found in the chloroplast. Located at the top of the head of the 30S subunit, it contacts several helices of the 16S rRNA. The sequence is that of Small ribosomal subunit protein uS13c from Emiliania huxleyi (Coccolithophore).